A 134-amino-acid chain; its full sequence is UPF0357 protein AAL017W (134 aa).

The signal sequence occupies residues 1 to 23 (MFGLISLWHLFWLAVMAGILVVA).

Belongs to the UPF0357 family.

This chain is UPF0357 protein AAL017W, found in Eremothecium gossypii (strain ATCC 10895 / CBS 109.51 / FGSC 9923 / NRRL Y-1056) (Yeast).